Consider the following 540-residue polypeptide: Probable H/ACA ribonucleoprotein complex subunit 4 (540 aa).

The tract at residues 1 to 24 is disordered; it reads MTTDKKSKSKSSEKSTQEVEQVIK. Asp-109 serves as the catalytic Nucleophile. The region spanning 280–355 is the PUA domain; sequence YKRIVVKDSA…VVATIKRVIM (76 aa). The segment at 414-540 is disordered; sequence SPVESMNVDT…DKKEKKKSKN (127 aa). The stretch at 448 to 494 forms a coiled coil; the sequence is KKEKKDKKEKKKDSSDDESEEEKSSKKDKKEKKEKKEKKEKKSSKDD. Basic residues predominate over residues 473–489; sequence KKDKKEKKEKKEKKEKK. Composition is skewed to basic and acidic residues over residues 490–503 and 513–528; these read SSKD…SKKE and SDKD…DKKD. Over residues 529–540 the composition is skewed to basic residues; it reads KKDKKEKKKSKN.

Belongs to the pseudouridine synthase TruB family. Component of the small nucleolar ribonucleoprotein particles containing H/ACA-type snoRNAs (H/ACA snoRNPs).

The protein localises to the nucleus. It is found in the nucleolus. It catalyses the reaction a uridine in RNA = a pseudouridine in RNA. Functionally, plays a central role in ribosomal RNA processing. Probable catalytic subunit of H/ACA small nucleolar ribonucleoprotein (H/ACA snoRNP) complex, which catalyzes pseudouridylation of rRNA. This involves the isomerization of uridine such that the ribose is subsequently attached to C5, instead of the normal N1. Pseudouridine ('psi') residues may serve to stabilize the conformation of rRNAs. The protein is Probable H/ACA ribonucleoprotein complex subunit 4 (nola4) of Dictyostelium discoideum (Social amoeba).